Reading from the N-terminus, the 424-residue chain is Dual-specificity RNA methyltransferase RlmN (424 aa).

Glu132 acts as the Proton acceptor in catalysis. The region spanning 138–388 (GPDRGTLCVS…VRTPRGRDIL (251 aa)) is the Radical SAM core domain. Cysteines 145 and 391 form a disulfide. Residues Cys152, Cys156, and Cys159 each contribute to the [4Fe-4S] cluster site. S-adenosyl-L-methionine is bound by residues 217–218 (GE), Ser249, 271–273 (SLH), and Asn348. Catalysis depends on Cys391, which acts as the S-methylcysteine intermediate.

The protein belongs to the radical SAM superfamily. RlmN family. Requires [4Fe-4S] cluster as cofactor.

It localises to the cytoplasm. It catalyses the reaction adenosine(2503) in 23S rRNA + 2 reduced [2Fe-2S]-[ferredoxin] + 2 S-adenosyl-L-methionine = 2-methyladenosine(2503) in 23S rRNA + 5'-deoxyadenosine + L-methionine + 2 oxidized [2Fe-2S]-[ferredoxin] + S-adenosyl-L-homocysteine. The enzyme catalyses adenosine(37) in tRNA + 2 reduced [2Fe-2S]-[ferredoxin] + 2 S-adenosyl-L-methionine = 2-methyladenosine(37) in tRNA + 5'-deoxyadenosine + L-methionine + 2 oxidized [2Fe-2S]-[ferredoxin] + S-adenosyl-L-homocysteine. Specifically methylates position 2 of adenine 2503 in 23S rRNA and position 2 of adenine 37 in tRNAs. m2A2503 modification seems to play a crucial role in the proofreading step occurring at the peptidyl transferase center and thus would serve to optimize ribosomal fidelity. This chain is Dual-specificity RNA methyltransferase RlmN, found in Methylobacterium radiotolerans (strain ATCC 27329 / DSM 1819 / JCM 2831 / NBRC 15690 / NCIMB 10815 / 0-1).